Reading from the N-terminus, the 366-residue chain is Chalcone synthase B (366 aa).

Residue Cys-172 is part of the active site.

This sequence belongs to the thiolase-like superfamily. Chalcone/stilbene synthases family.

The enzyme catalyses (E)-4-coumaroyl-CoA + 3 malonyl-CoA + 3 H(+) = 2',4,4',6'-tetrahydroxychalcone + 3 CO2 + 4 CoA. The protein operates within secondary metabolite biosynthesis; flavonoid biosynthesis. Functionally, the primary product of this enzyme is 4,2',4',6'-tetrahydroxychalcone (also termed naringenin-chalcone or chalcone) which can under specific conditions spontaneously isomerize into naringenin. The polypeptide is Chalcone synthase B (CHSB) (Ipomoea triloba (Trilobed morning glory)).